Here is a 1058-residue protein sequence, read N- to C-terminus: MGSVSNLVSPNICHPAPPCLTSRSNKFPWTKPISGLLFYRSVTPIKRCHLVRRSCVVSASLTGNLGRLKRNVQDFTSMNYWVVRDYYRLVESVNSLEPQIQSLSDEQLKAKTAEFRERLARGESLADMQAEAFAVVREAAKRTIGMRHFDVQIIGGGVLHDGSIAEMKTGEGKTLVSTLAAYLNALTGEGVHVVTVNDYLAQRDAEWMGRVHRFLGLSVGLIQRGMKAEERKFNYSCDITYTNNSELGFDYLRDNLTSNREQLVMRWPKPFHFAIVDEVDSVLIDEGRNPLLISGEANENAARYPVAAKVAELLVKDSHYKVELKENSVELTEEGISLAEMALETGDLWDENDPWARFVMNALKAKEFYKRDVQYIVRDGKALIINELTGRVEDKRRWSEGVHQAVEAKEGLEIQADSIVVAQITYQSLFKLYPKLSGMTGTAKTEEKEFLKMFQIPVIEVPTNLSNIRIDLPIQAFATARGKWEHVRREVEDMFGQGRPVLVGTTSVENSEYLSELLKEWGIPHNVLNARPKYAAREADFIAQAGRKYAITISTNMAGRGTDIILGGNPKMLAREIIEDSILSYLTSEVLADNIDDDELSQKVLSKIKVGPSSLALLARASLMAKYVGKSESKSWTRKKAKSVVTESLEKSQTMDPMELQNLINEQSEMYPLGPAIALAYLSVLKDCEAHCLHEGSEVKRLGGLHVIGTSLHESRRIDNQLRGRAGRQGDPGSTRFMISLQDEMFQKFNFDTEWAVRLISKITNDEDLPIEGDTIVKQLLALQINAEKYFFGIRKSLVEFDEVLEVQRKHVYDLRQLLLTGENESCSQHIFQYMQAVVDEIVVGNSNPQKHPRYWSLAKLLKEFMAISGNLLDESFSGITEETMLQSLENLHEGSSIEMEDLSLPHLPKPPNAFRGIRRKNSSLRRWLDICSDNLTGSGSYRTLINLLRKFLGDYLIASYLNVVQESGFDDGYIKEIERAVLLKTLDCYWRDHLVNMNKLSSAVNVRSFAHRNPLEEYKIDGCRFFISMLSATRRLTVESILQYWSSPMESQELFIS.

A chloroplast-targeting transit peptide spans Met1–Ser58. ATP is bound at residue Met167–Thr174.

This sequence belongs to the SecA family. Part of a second Sec protein translocation apparatus. Interacts probably with SCY2.

It localises to the plastid. Its subcellular location is the chloroplast membrane. It carries out the reaction ATP + H2O + chloroplast-proteinSide 1 = ADP + phosphate + chloroplast-proteinSide 2.. Functionally, involved in protein export. Probably interacts with other proteins to allow the postimport or conservative sorting pathway for inner membrane proteins in plastids. May have a central role in coupling the hydrolysis of ATP to the transfer of proteins across the membrane. The sequence is that of Protein translocase subunit SECA2, chloroplastic from Arabidopsis thaliana (Mouse-ear cress).